Reading from the N-terminus, the 65-residue chain is Large ribosomal subunit protein bL31 (65 aa).

Residues cysteine 16, cysteine 18, cysteine 36, and cysteine 39 each contribute to the Zn(2+) site.

It belongs to the bacterial ribosomal protein bL31 family. Type A subfamily. Part of the 50S ribosomal subunit. The cofactor is Zn(2+).

Functionally, binds the 23S rRNA. The protein is Large ribosomal subunit protein bL31 of Geotalea uraniireducens (strain Rf4) (Geobacter uraniireducens).